A 1549-amino-acid chain; its full sequence is MEELDGSLSQTRKAHRIEQMVARWLRRSRDSSARAKVAAADGPPGNPAQALTPVRHTVTLDKDVLLQNYGFHISETLPLTVVAVTAGGSAHGKLFPGDQILQMNNELAEDLSCERAADILRETEDALSITVVRCTSGVPKSSFLTEEKRARLKSNPVKVHFAEEVLVSGHSQGNSLLCMPNVLKVYLENGQTKAFKFEANTTVKDIILTVKEKLSIRSIEYFALALEEQYSISRLHLLHEEELVQQVVEREESQDSRCLFRVSFVPKDPLDLLKEDPVAFEYLYLQSCSDVLQERFAVEMKCNSALRLAALHIQERIYACAQPQKISLKYIEKDWGIENFISPTLLRNMKGKDIKKAISFHMKRNQNLLEPRQKQLISAAQLRLNYLQILGELKTYGGKVFNATLMLQDRESYIALLVGAKYGISQIINSKLNIISTLAEFANISRVELTEESEKVSMVKVYLQDVKVLTLLLESSSAKDLACLIAGYYRLFVDPANSVFHWSGNRRPTHRVSAEEGYESRACSDSEESSEVDCVLEPLSDRCLVKLSLCRPFAREEQPPGDSPTPEATRRGPSTCGASSMTDSAESEASDSANTESRGCRTSGSSESMDALEEDDLDACSSSGTSFFHFGPPGFSKGLETNSQEENSRVETSGFLCLLDLGQNANPQCQKIDGPQGLASEACSWGPELSMGRLDPRLYEGSRTDYYNLCSSISPGSHLSDSGSESTASRQGAAPPQWCQQGWMEAQSGSMLESLGLPALPPLAFEGGSSDEEYYDAADKLTPPDTLSGPRAADPSAMRLQSQSRTRGSEESLHPGPEGGEPSRQGGVKKYAKSLRKRRSFLQTDHTSQVSFPLEASASQENTDDVCYYDREPYLTLTAPSPTVSSLQDMQGEPGLLETKALGLLASLRETKSTNPASRIMEMEPETMETKSVIDSRVSSISAIRLRIDPSNTENPVTTDGSSASIPHSPHHSNPGSSSPQAAQVRPFPIVSPDQDPGGTTPKELTAEPEDSTFPLSSDHPNPDNPGPHHVSQGDTSELGEVRSEIGSESFLINHVQEVIPQITGPLCPGDGPTSGECEVNSEETALAADEVQGQLSLDSDREVMHRNGPSLFQKGSGKDLGDSKGDRLDNVPQALDVRAPAGEINSSLCSEPPATGTGQTSSDSEGENREAQEQELLTELDLAPDFLLPSAFPPETIKAEQLDRVIGEDSVPVSTSQQVCVHTVPSLPKLSPCQEEPRSADSGHGSPAESKGDDSPIICLPPERSFLCFAPESHPEGSTSLSRVTSFSFAGINEVAPAEIGIEHCRCQFSYATCFRGLQPETEEEDGDPQTHPAAPLTSPPSAGSQVTLPWRAARAYSCTTPLSRKSHIWPEFCSRALRQLKTTPTNAPEGFVQLTESLLELQDILEASWGVGNKHPPDKCTLHFSESRSRLCMGSQKLLASCQHVIRMDQSPEEMQGAVRVTFQHLVQLAGLCFQFTDCSRCSTRHREVAGNLRDVVYTYHQFVEAAKLTCERGYHDFSVKLLARQCTALTAAVFCLTQKFRASTAL.

A PDZ domain is found at 57–135 (TVTLDKDVLL…ALSITVVRCT (79 aa)). The 316-residue stretch at 181–496 (NVLKVYLENG…GYYRLFVDPA (316 aa)) folds into the FERM domain. Disordered stretches follow at residues 554–618 (AREE…DDLD), 717–738 (SHLS…PPQW), 775–834 (YDAA…YAKS), 913–1046 (STNP…RSEI), 1097–1174 (SLDS…EAQE), 1231–1257 (LSPC…DDSP), and 1321–1347 (PETE…AGSQ). The span at 717-730 (SHLSDSGSESTASR) shows a compositional bias: polar residues. The segment at 924 to 931 (EPETMETK) is important for interaction with GPSM2. The span at 950-961 (PSNTENPVTTDG) shows a compositional bias: polar residues. The segment covering 962-980 (SSASIPHSPHHSNPGSSSP) has biased composition (low complexity). The span at 1117-1130 (SGKDLGDSKGDRLD) shows a compositional bias: basic and acidic residues.

In terms of assembly, interacts with GPSM1. Interacts with GPSM2.

The protein localises to the cytoplasm. Its subcellular location is the cytosol. It localises to the cell membrane. In terms of biological role, stabilizes membrane-bound GPSM1, and thereby promotes its interaction with GNAI1. In Mus musculus (Mouse), this protein is FERM and PDZ domain-containing protein 1 (Frmpd1).